The following is a 404-amino-acid chain: Probable ribosomal oxygenase HI_0396 (404 aa).

In terms of domain architecture, JmjC spans 102–231 (ELGQLWNKFG…LIDGISKGFC (130 aa)). Residues histidine 135, aspartate 137, and histidine 199 each contribute to the Fe cation site.

The protein belongs to the ROX family. The cofactor is Fe(2+).

Oxygenase that catalyzes the hydroxylation of a ribosomal protein. The polypeptide is Probable ribosomal oxygenase HI_0396 (Haemophilus influenzae (strain ATCC 51907 / DSM 11121 / KW20 / Rd)).